A 187-amino-acid chain; its full sequence is Cytokinin riboside 5'-monophosphate phosphoribohydrolase (187 aa).

Substrate contacts are provided by residues glutamate 80, 98 to 99 (RK), 115 to 121 (GVGTLDE), and threonine 127.

This sequence belongs to the LOG family.

The catalysed reaction is N(6)-(dimethylallyl)adenosine 5'-phosphate + H2O = N(6)-dimethylallyladenine + D-ribose 5-phosphate. The enzyme catalyses 9-ribosyl-trans-zeatin 5'-phosphate + H2O = trans-zeatin + D-ribose 5-phosphate. Catalyzes the hydrolytic removal of ribose 5'-monophosphate from nitrogen N6-modified adenosines, the final step of bioactive cytokinin synthesis. This Mycobacterium marinum (strain ATCC BAA-535 / M) protein is Cytokinin riboside 5'-monophosphate phosphoribohydrolase.